The sequence spans 72 residues: MAAKKKLLAELREKSLVELDAFIHENKKALFSLRAEAALQNKVVKKHLFSMYKKNIARSMTVMQEKEGKIDG.

It belongs to the universal ribosomal protein uL29 family.

The chain is Large ribosomal subunit protein uL29 from Chlamydia caviae (strain ATCC VR-813 / DSM 19441 / 03DC25 / GPIC) (Chlamydophila caviae).